A 247-amino-acid chain; its full sequence is Ribose-5-phosphate isomerase (247 aa).

The protein belongs to the ribose 5-phosphate isomerase family.

The protein localises to the cytoplasm. It catalyses the reaction aldehydo-D-ribose 5-phosphate = D-ribulose 5-phosphate. It functions in the pathway carbohydrate degradation; pentose phosphate pathway; D-ribose 5-phosphate from D-ribulose 5-phosphate (non-oxidative stage): step 1/1. The polypeptide is Ribose-5-phosphate isomerase (RKI1) (Meyerozyma guilliermondii (strain ATCC 6260 / CBS 566 / DSM 6381 / JCM 1539 / NBRC 10279 / NRRL Y-324) (Yeast)).